The sequence spans 355 residues: Heterogeneous nuclear ribonucleoprotein D0 (355 aa).

The interval 1–91 (MSEEQFGGDG…SSPRHTEAAA (91 aa)) is disordered. Ser-2 carries the N-acetylserine modification. Residues 11–43 (AAAAATAAVGGSAGEQEGAMVAAAAQGPAAAAG) are compositionally biased toward low complexity. Gly residues predominate over residues 44-58 (SGSGGGGSAAGGTEG). Residues 64 to 73 (EGAKIDASKN) are compositionally biased toward basic and acidic residues. Ser-71 is subject to Phosphoserine. A Glycyl lysine isopeptide (Lys-Gly) (interchain with G-Cter in SUMO2) cross-link involves residue Lys-72. 3 positions are modified to phosphoserine: Ser-80, Ser-82, and Ser-83. RRM domains are found at residues 97–179 (WKMF…KTKE) and 182–261 (KKIF…MSKE). Position 119 is an N6-methyllysine (Lys-119). The residue at position 127 (Thr-127) is a Phosphothreonine. Lys-129 is covalently cross-linked (Glycyl lysine isopeptide (Lys-Gly) (interchain with G-Cter in SUMO2)). Position 165 is an N6-acetyllysine (Lys-165). Phosphoserine is present on Ser-190. Thr-193 carries the post-translational modification Phosphothreonine. Lys-197 participates in a covalent cross-link: Glycyl lysine isopeptide (Lys-Gly) (interchain with G-Cter in SUMO2). 2 positions are modified to N6-acetyllysine: Lys-243 and Lys-251. Glu-261 and Tyr-263 each carry omega-N-methylarginine. The residue at position 271 (Ser-271) is a Phosphoserine. 4 positions are modified to omega-N-methylarginine: Arg-272, Arg-278, Arg-280, and Arg-282. Arg-345 carries the post-translational modification Asymmetric dimethylarginine; alternate. Residue Arg-345 is modified to Dimethylated arginine; alternate. At Arg-345 the chain carries Omega-N-methylarginine; alternate.

As to quaternary structure, identified in a IGF2BP1-dependent mRNP granule complex containing untranslated mRNAs. Part of a complex associated with the FOS mCRD domain and consisting of PABPC1, PAIP1, CSDE1/UNR and SYNCRIP. Interacts with IGF2BP2. Interacts with GTPBP1. Interacts with EIF4G1; the interaction requires RNA. Interacts with EIF3B and RPS3. Methylated by PRMT1, in an insulin-dependent manner. The PRMT1-mediated methylation regulates its phosphorylation. In terms of processing, arg-345 is dimethylated, probably to asymmetric dimethylarginine.

The protein resides in the nucleus. It localises to the cytoplasm. Functionally, binds with high affinity to RNA molecules that contain AU-rich elements (AREs) found within the 3'-UTR of many proto-oncogenes and cytokine mRNAs. Also binds to double- and single-stranded DNA sequences in a specific manner and functions a transcription factor. Each of the RNA-binding domains specifically can bind solely to a single-stranded non-monotonous 5'-UUAG-3' sequence and also weaker to the single-stranded 5'-TTAGGG-3' telomeric DNA repeat. Binds RNA oligonucleotides with 5'-UUAGGG-3' repeats more tightly than the telomeric single-stranded DNA 5'-TTAGGG-3' repeats. Binding of RRM1 to DNA inhibits the formation of DNA quadruplex structure which may play a role in telomere elongation. May be involved in translationally coupled mRNA turnover. Implicated with other RNA-binding proteins in the cytoplasmic deadenylation/translational and decay interplay of the FOS mRNA mediated by the major coding-region determinant of instability (mCRD) domain. May play a role in the regulation of the rhythmic expression of circadian clock core genes. Directly binds to the 3'UTR of CRY1 mRNA and induces CRY1 rhythmic translation. May also be involved in the regulation of PER2 translation. This is Heterogeneous nuclear ribonucleoprotein D0 (Hnrnpd) from Mus musculus (Mouse).